The following is a 154-amino-acid chain: Ribosome maturation factor RimP (154 aa).

It belongs to the RimP family.

The protein localises to the cytoplasm. In terms of biological role, required for maturation of 30S ribosomal subunits. The polypeptide is Ribosome maturation factor RimP (Acetivibrio thermocellus (strain ATCC 27405 / DSM 1237 / JCM 9322 / NBRC 103400 / NCIMB 10682 / NRRL B-4536 / VPI 7372) (Clostridium thermocellum)).